The chain runs to 247 residues: UPF0259 membrane protein BUAPTUC7_273 (247 aa).

The next 6 membrane-spanning stretches (helical) occupy residues 20-40, 85-105, 114-134, 137-157, 188-208, and 218-238; these read IGAI…IDMF, IMES…LISF, IVSS…LNFL, FIIQ…SIIL, IIGP…MLLA, and LFLI…IYLF.

The protein belongs to the UPF0259 family.

Its subcellular location is the cell membrane. This chain is UPF0259 membrane protein BUAPTUC7_273, found in Buchnera aphidicola subsp. Acyrthosiphon pisum (strain Tuc7).